Here is a 91-residue protein sequence, read N- to C-terminus: Large ribosomal subunit protein eL34 (91 aa).

Positions 48 to 71 (RGRPVEMRKLPKTKKRPERPYPHL) are disordered.

Belongs to the eukaryotic ribosomal protein eL34 family.

The polypeptide is Large ribosomal subunit protein eL34 (rpl34e) (Pyrococcus abyssi (strain GE5 / Orsay)).